The following is a 498-amino-acid chain: Pentatricopeptide repeat-containing protein At2g15980 (498 aa).

PPR repeat units follow at residues 244–274, 280–314, 315–349, 350–384, 385–423, 424–458, and 459–489; these read NATT…MEEE, NVYS…GVVY, DIVA…GIEC, TCLT…GFEA, DGLT…MFYP, SRNC…GFKP, and SQET…MAES.

The protein belongs to the PPR family. P subfamily.

The protein is Pentatricopeptide repeat-containing protein At2g15980 of Arabidopsis thaliana (Mouse-ear cress).